Here is a 282-residue protein sequence, read N- to C-terminus: Bis(5'-nucleosyl)-tetraphosphatase, symmetrical (282 aa).

This sequence belongs to the Ap4A hydrolase family.

The catalysed reaction is P(1),P(4)-bis(5'-adenosyl) tetraphosphate + H2O = 2 ADP + 2 H(+). Its function is as follows. Hydrolyzes diadenosine 5',5'''-P1,P4-tetraphosphate to yield ADP. The sequence is that of Bis(5'-nucleosyl)-tetraphosphatase, symmetrical from Paraburkholderia phymatum (strain DSM 17167 / CIP 108236 / LMG 21445 / STM815) (Burkholderia phymatum).